The chain runs to 316 residues: Ornithine carbamoyltransferase (316 aa).

Carbamoyl phosphate-binding positions include 57–60 (STRT), Q84, R108, and 135–138 (HPCQ). Residues N166, D230, and 234 to 235 (SM) contribute to the L-ornithine site. Carbamoyl phosphate is bound by residues 269–270 (CL) and R297.

It belongs to the aspartate/ornithine carbamoyltransferase superfamily. OTCase family.

The protein resides in the cytoplasm. It catalyses the reaction carbamoyl phosphate + L-ornithine = L-citrulline + phosphate + H(+). It participates in amino-acid degradation; L-arginine degradation via ADI pathway; carbamoyl phosphate from L-arginine: step 2/2. Its function is as follows. Reversibly catalyzes the transfer of the carbamoyl group from carbamoyl phosphate (CP) to the N(epsilon) atom of ornithine (ORN) to produce L-citrulline. The protein is Ornithine carbamoyltransferase of Bacillus cereus (strain AH187).